A 331-amino-acid chain; its full sequence is Aldo-keto reductase family 7 member A3 (331 aa).

A Phosphoserine modification is found at serine 6. 3 residues coordinate NADPH: methionine 17, aspartate 44, and tyrosine 49. The active-site Proton donor is the tyrosine 49. Phosphoserine is present on serine 85. The NADPH site is built by histidine 113, serine 143, asparagine 144, asparagine 198, leucine 200, glycine 202, lysine 208, tyrosine 209, and arginine 222. Threonine 227 is subject to Phosphothreonine. Residues serine 290, glutamine 294, and asparagine 298 each contribute to the NADPH site.

The protein belongs to the aldo/keto reductase family. Aldo/keto reductase 2 subfamily. Homodimer. As to expression, expressed in colon, kidney, liver, pancreas, adenocarcinoma and endometrium.

It is found in the cytoplasm. It carries out the reaction a primary alcohol + NADP(+) = an aldehyde + NADPH + H(+). It catalyses the reaction aflatoxin B1 dialdehyde + NADPH + H(+) = aflatoxin B1 C(6a)-monoaldehyde + NADP(+). The enzyme catalyses aflatoxin B1 dialdehyde + NADPH + H(+) = aflatoxin B1 C(8)-monoaldehyde + NADP(+). The catalysed reaction is aflatoxin B1 C(6a)-monoaldehyde + NADPH + 2 H(+) = aflatoxin B1 triol + NADP(+). Inhibited by citrate. In terms of biological role, catalyzes the NADPH-dependent reduction of various carbonyl-containing compounds, including aldehydes, ketones, and toxic products from cellular metabolism or environmental exposure. Can reduce the dialdehyde form of aflatoxin B1 (AFB1) into alcohol derivatives, via monoaldehydes intermediates. Can reduce the dialdehyde form of aflatoxin B1 (AFB1) into alcohol derivatives, via monoaldehydes intermediates, thus preventing the formation of protein adducts that contribute to AFB1-induced toxicity. The chain is Aldo-keto reductase family 7 member A3 from Homo sapiens (Human).